Consider the following 251-residue polypeptide: Aspartate/glutamate leucyltransferase (251 aa).

This sequence belongs to the R-transferase family. Bpt subfamily.

The protein localises to the cytoplasm. The catalysed reaction is N-terminal L-glutamyl-[protein] + L-leucyl-tRNA(Leu) = N-terminal L-leucyl-L-glutamyl-[protein] + tRNA(Leu) + H(+). It carries out the reaction N-terminal L-aspartyl-[protein] + L-leucyl-tRNA(Leu) = N-terminal L-leucyl-L-aspartyl-[protein] + tRNA(Leu) + H(+). Functions in the N-end rule pathway of protein degradation where it conjugates Leu from its aminoacyl-tRNA to the N-termini of proteins containing an N-terminal aspartate or glutamate. This is Aspartate/glutamate leucyltransferase from Nitrosospira multiformis (strain ATCC 25196 / NCIMB 11849 / C 71).